The chain runs to 190 residues: Xanthine phosphoribosyltransferase (190 aa).

Residues Leu20 and Asn27 each coordinate xanthine. 128–132 contributes to the 5-phospho-alpha-D-ribose 1-diphosphate binding site; sequence ANGKA. A xanthine-binding site is contributed by Lys156.

This sequence belongs to the purine/pyrimidine phosphoribosyltransferase family. Xpt subfamily. In terms of assembly, homodimer.

It is found in the cytoplasm. It catalyses the reaction XMP + diphosphate = xanthine + 5-phospho-alpha-D-ribose 1-diphosphate. It participates in purine metabolism; XMP biosynthesis via salvage pathway; XMP from xanthine: step 1/1. In terms of biological role, converts the preformed base xanthine, a product of nucleic acid breakdown, to xanthosine 5'-monophosphate (XMP), so it can be reused for RNA or DNA synthesis. In Stutzerimonas stutzeri (strain A1501) (Pseudomonas stutzeri), this protein is Xanthine phosphoribosyltransferase.